The sequence spans 327 residues: tRNA N6-adenosine threonylcarbamoyltransferase (327 aa).

Fe cation-binding residues include His109 and His113. Substrate is bound by residues 132-136 (MVSGG), Asp165, Gly178, Asp182, and Asn268. Asp296 contacts Fe cation.

This sequence belongs to the KAE1 / TsaD family. As to quaternary structure, forms a hexamer composed of two TsaB, TsaD and TsaE trimers. Fe(2+) is required as a cofactor.

The protein resides in the cytoplasm. The catalysed reaction is L-threonylcarbamoyladenylate + adenosine(37) in tRNA = N(6)-L-threonylcarbamoyladenosine(37) in tRNA + AMP + H(+). Its function is as follows. Required for the formation of a threonylcarbamoyl group on adenosine at position 37 (t(6)A37) in tRNAs that read codons beginning with adenine. Is involved in the transfer of the threonylcarbamoyl moiety of threonylcarbamoyl-AMP (TC-AMP) to the N6 group of A37, together with TsaE and TsaB. TsaD likely plays a direct catalytic role in this reaction. The polypeptide is tRNA N6-adenosine threonylcarbamoyltransferase (Thermotoga maritima (strain ATCC 43589 / DSM 3109 / JCM 10099 / NBRC 100826 / MSB8)).